Consider the following 166-residue polypeptide: Dihydrofolate reductase (166 aa).

The region spanning 6–164 is the DHFR domain; the sequence is KISLIVAMDK…YDYYFHIYER (159 aa). 10–12 serves as a coordination point for substrate; sequence IVA. NADP(+) contacts are provided by residues 11–12 and 19–24; these read VA and IGKDND. A substrate-binding site is contributed by D32. 48 to 51 is an NADP(+) binding site; the sequence is GRKN. R62 lines the substrate pocket. NADP(+) contacts are provided by residues 67-70 and 100-105; these read LTRD and FGGEQI. T119 provides a ligand contact to substrate.

It belongs to the dihydrofolate reductase family.

It carries out the reaction (6S)-5,6,7,8-tetrahydrofolate + NADP(+) = 7,8-dihydrofolate + NADPH + H(+). Its pathway is cofactor biosynthesis; tetrahydrofolate biosynthesis; 5,6,7,8-tetrahydrofolate from 7,8-dihydrofolate: step 1/1. Functionally, key enzyme in folate metabolism. Catalyzes an essential reaction for de novo glycine and purine synthesis, and for DNA precursor synthesis. The protein is Dihydrofolate reductase (dfrD) of Staphylococcus haemolyticus.